A 141-amino-acid polypeptide reads, in one-letter code: Hemoglobin subunit alpha (141 aa).

A Globin domain is found at 1–141; sequence VLSAADKSNV…VSTVLTSKYR (141 aa). Serine 3 carries the post-translational modification Phosphoserine. Lysine 7 and lysine 11 each carry N6-succinyllysine. N6-acetyllysine; alternate is present on lysine 16. Lysine 16 is modified (N6-succinyllysine; alternate). Position 24 is a phosphotyrosine (tyrosine 24). Residue serine 35 is modified to Phosphoserine. Lysine 40 bears the N6-succinyllysine mark. Serine 49 is modified (phosphoserine). Histidine 58 lines the O2 pocket. Position 87 (histidine 87) interacts with heme b. Serine 102 bears the Phosphoserine mark. Phosphothreonine is present on threonine 108. Serine 124 carries the post-translational modification Phosphoserine. A phosphothreonine mark is found at threonine 134 and threonine 137. At serine 138 the chain carries Phosphoserine.

Belongs to the globin family. In terms of assembly, heterotetramer of two alpha chains and two beta chains. As to expression, red blood cells.

In terms of biological role, involved in oxygen transport from the lung to the various peripheral tissues. Functionally, hemopressin acts as an antagonist peptide of the cannabinoid receptor CNR1. Hemopressin-binding efficiently blocks cannabinoid receptor CNR1 and subsequent signaling. The polypeptide is Hemoglobin subunit alpha (HBA) (Rangifer tarandus (Reindeer)).